Consider the following 321-residue polypeptide: uncharacterized protein (321 aa).

Over residues 1 to 12 (MSMFLKKQKKTK) the composition is skewed to basic residues. Disordered stretches follow at residues 1–59 (MSMF…MRKT) and 71–289 (EDCT…GPED). A compositionally biased stretch (basic and acidic residues) spans 50 to 59 (DGIKETMRKT). Over residues 99-115 (DDSDSESSEDGGEDDEE) the composition is skewed to acidic residues. Over residues 156 to 175 (SDSSSSSSSSSDSESSSSSD) the composition is skewed to low complexity. Residues 179–189 (DGDRSTPEPDI) show a composition bias toward basic and acidic residues. Residues 231–242 (EPSPLRAAAAAA) are compositionally biased toward low complexity.

This is an uncharacterized protein from Equus caballus (Horse).